A 357-amino-acid polypeptide reads, in one-letter code: DNA primase small subunit PriS (357 aa).

Catalysis depends on residues Asp105, Asp107, and Asp259.

Belongs to the eukaryotic-type primase small subunit family. In terms of assembly, heterodimer of a small subunit (PriS) and a large subunit (PriL). The cofactor is Mg(2+). Mn(2+) is required as a cofactor.

Functionally, catalytic subunit of DNA primase, an RNA polymerase that catalyzes the synthesis of short RNA molecules used as primers for DNA polymerase during DNA replication. The small subunit contains the primase catalytic core and has DNA synthesis activity on its own. Binding to the large subunit stabilizes and modulates the activity, increasing the rate of DNA synthesis while decreasing the length of the DNA fragments, and conferring RNA synthesis capability. The DNA polymerase activity may enable DNA primase to also catalyze primer extension after primer synthesis. May also play a role in DNA repair. In Methanococcus maripaludis (strain C6 / ATCC BAA-1332), this protein is DNA primase small subunit PriS.